We begin with the raw amino-acid sequence, 87 residues long: NADH dehydrogenase [ubiquinone] 1 alpha subcomplex subunit 4-like 2 (87 aa).

Belongs to the complex I NDUFA4 subunit family.

The chain is NADH dehydrogenase [ubiquinone] 1 alpha subcomplex subunit 4-like 2 (NDUFA4L2) from Homo sapiens (Human).